Reading from the N-terminus, the 580-residue chain is 2-hydroxyacyl-CoA lyase 1 (580 aa).

Residue Glu-47 participates in thiamine diphosphate binding. Residues 413–494 (TMDIGRLCIP…FIVLNNNGVY (82 aa)) are thiamine pyrophosphate binding. Mg(2+) is bound by residues Asp-463 and Asn-490.

This sequence belongs to the TPP enzyme family. Homotetramer. Requires Mg(2+) as cofactor. Thiamine diphosphate serves as cofactor.

It is found in the peroxisome. It catalyses the reaction a 2-hydroxy-3-methyl fatty acyl-CoA = a 2-methyl-branched fatty aldehyde + formyl-CoA. It carries out the reaction an (R)-2-hydroxy-long-chain-fatty acyl-CoA = a long-chain fatty aldehyde + formyl-CoA. The catalysed reaction is 2-hydroxy-3-methylhexadecanoyl-CoA = 2-methylpentadecanal + formyl-CoA. The enzyme catalyses 2-hydroxyoctadecanoyl-CoA = heptadecanal + formyl-CoA. In terms of biological role, peroxisomal 2-OH acyl-CoA lyase involved in the cleavage (C1 removal) reaction in the fatty acid alpha-oxydation in a thiamine pyrophosphate (TPP)-dependent manner. Involved in the degradation of 3-methyl-branched fatty acids and the shortening of 2-hydroxy long-chain fatty acids. The protein is 2-hydroxyacyl-CoA lyase 1 (hacl1) of Dictyostelium discoideum (Social amoeba).